The primary structure comprises 234 residues: Small ribosomal subunit protein eS1y (234 aa).

The span at 1-18 shows a compositional bias: basic residues; it reads MAVGKNKRISKGKKGGKK. The interval 1-20 is disordered; it reads MAVGKNKRISKGKKGGKKKA.

It belongs to the eukaryotic ribosomal protein eS1 family. In terms of assembly, component of the small ribosomal subunit. Mature ribosomes consist of a small (40S) and a large (60S) subunit. The 40S subunit contains about 33 different proteins and 1 molecule of RNA (18S). The 60S subunit contains about 49 different proteins and 3 molecules of RNA (25S, 5.8S and 5S).

The protein localises to the cytoplasm. The chain is Small ribosomal subunit protein eS1y from Vitis vinifera (Grape).